The sequence spans 172 residues: Adenine phosphoribosyltransferase (172 aa).

The protein belongs to the purine/pyrimidine phosphoribosyltransferase family. In terms of assembly, homodimer.

It is found in the cytoplasm. The catalysed reaction is AMP + diphosphate = 5-phospho-alpha-D-ribose 1-diphosphate + adenine. Its pathway is purine metabolism; AMP biosynthesis via salvage pathway; AMP from adenine: step 1/1. Functionally, catalyzes a salvage reaction resulting in the formation of AMP, that is energically less costly than de novo synthesis. The sequence is that of Adenine phosphoribosyltransferase from Streptococcus uberis (strain ATCC BAA-854 / 0140J).